Here is a 544-residue protein sequence, read N- to C-terminus: Probable protein kinase UbiB (544 aa).

A helical transmembrane segment spans residues 1–21 (MIFGELRRLYLIIGVMLSYGL). The region spanning 123–500 (DFQQEPLASA…HVRQSQSRFL (378 aa)) is the Protein kinase domain. Residues 129-137 (LASASIAQV) and Lys151 each bind ATP. Residue Asp286 is the Proton acceptor of the active site. The next 2 helical transmembrane spans lie at 499-519 (FLFG…TQGA) and 520-540 (DEGS…IIGW).

This sequence belongs to the ABC1 family. UbiB subfamily.

The protein resides in the cell inner membrane. Its pathway is cofactor biosynthesis; ubiquinone biosynthesis [regulation]. Functionally, is probably a protein kinase regulator of UbiI activity which is involved in aerobic coenzyme Q (ubiquinone) biosynthesis. This chain is Probable protein kinase UbiB, found in Sodalis glossinidius (strain morsitans).